The primary structure comprises 137 residues: NADH-quinone oxidoreductase subunit A (137 aa).

Helical transmembrane passes span 12-32 (WGFA…LGLS), 66-86 (FYLV…LFAW), and 95-115 (WTGF…LVYL).

It belongs to the complex I subunit 3 family. In terms of assembly, NDH-1 is composed of 13 different subunits. Subunits NuoA, H, J, K, L, M, N constitute the membrane sector of the complex.

Its subcellular location is the cell inner membrane. The enzyme catalyses a quinone + NADH + 5 H(+)(in) = a quinol + NAD(+) + 4 H(+)(out). Its function is as follows. NDH-1 shuttles electrons from NADH, via FMN and iron-sulfur (Fe-S) centers, to quinones in the respiratory chain. The immediate electron acceptor for the enzyme in this species is believed to be ubiquinone. Couples the redox reaction to proton translocation (for every two electrons transferred, four hydrogen ions are translocated across the cytoplasmic membrane), and thus conserves the redox energy in a proton gradient. The polypeptide is NADH-quinone oxidoreductase subunit A (Pseudomonas savastanoi pv. phaseolicola (strain 1448A / Race 6) (Pseudomonas syringae pv. phaseolicola (strain 1448A / Race 6))).